The following is a 2038-amino-acid chain: Homeotic protein female sterile (2038 aa).

The region spanning 34 to 140 (RNTNQLQYLI…KVFLQKIESM (107 aa)) is the Bromo 1 domain. The interval 145–284 (LELEPVTAKG…TTAMAGGVGG (140 aa)) is disordered. Low complexity-rich tracts occupy residues 177 to 209 (GSGT…SGLQ) and 268 to 279 (PGSTNTTTTAMA). The chain crosses the membrane as a helical span at residues 330-350 (AAVAAAAAAAAAAAAAAGGAA). Residues 396 to 432 (KGVKRKADTTTPTANAFESPYTQMDSKSAKIATRRES) form a disordered region. Over residues 404–421 (TTTPTANAFESPYTQMDS) the composition is skewed to polar residues. A helical transmembrane segment spans residues 451-471 (VSGVPGLGGLVAGGVAGVAVA). Position 452 is a phosphoserine (S452). A Bromo 2 domain is found at 475 to 584 (EKLSDALKSC…DVFEMRYANI (110 aa)). Disordered stretches follow at residues 590 to 655 (ANAA…ERSA) and 677 to 735 (EASA…SVPG). Residues 593 to 619 (AHHHGHGHGHGHGHGHGHGHGHGHGHG) show a composition bias toward basic residues. The span at 636–649 (SSEDSSDTENESNS) shows a compositional bias: acidic residues. The span at 681–694 (KKKAKKKLKEKKKS) shows a compositional bias: basic residues. Positions 711–735 (TGGGANAGGAGGPGSGGHGSVSVPG) are enriched in gly residues. Helical transmembrane passes span 750–770 (LNAL…AGGV), 790–810 (MAGG…AAGA), and 816–830 (AGTL…AAAG). Disordered regions lie at residues 832–858 (GGTT…SGAG), 891–956 (AGAA…SYDE), 1016–1139 (CLRK…GGNL), 1217–1260 (AVSA…ATVA), 1384–1416 (QPAG…QQQQ), 1502–1530 (MQQM…QQQH), 1580–1616 (IESM…PNAA), 1645–1728 (WSSL…VAQA), 1745–1918 (AAAA…SGAI), and 1957–2023 (MESG…GQID). The helical transmembrane segment at 874–894 (GAAGAAAGAGSVGGVGGAGAA) threads the bilayer. Residues 910-927 (GAGGGVGGANASAGGAGA) are compositionally biased toward gly residues. Positions 942 to 1024 (DSEEEDTAKP…SCLRKKTHKK (83 aa)) constitute an NET domain. S943 is modified (phosphoserine). The segment covering 1017-1027 (LRKKTHKKPSG) has biased composition (basic residues). Basic and acidic residues predominate over residues 1028 to 1046 (KSKDEQMAEKKQELEKRLQ). Over residues 1079-1100 (SSSSSSSDSSSSSSSDSSSSDS) the composition is skewed to low complexity. Polar residues-rich tracts occupy residues 1121 to 1131 (SNGSNVNNPSI) and 1222 to 1232 (TGQQHNKNGPN). The span at 1645 to 1665 (WSSLASANSPQSHTSSSSSSS) shows a compositional bias: low complexity. Phosphoserine is present on S1653. A compositionally biased stretch (basic and acidic residues) spans 1680 to 1708 (KAKERDRLKLLEAAEKEKKNQKEAAEKEQ). Composition is skewed to low complexity over residues 1716 to 1728 (SSSS…VAQA) and 1745 to 1760 (AAAA…PSGG). A helical membrane pass occupies residues 1731 to 1751 (IAAATAAAAVTLGAAAAAALA). A compositionally biased stretch (basic and acidic residues) spans 1776-1791 (GDRDRDRDRERERERS). Residues 1800–1813 (NGNNSSNSANSNGP) show a composition bias toward low complexity. Gly residues-rich tracts occupy residues 1814 to 1828 (GSAG…GGSG) and 1835 to 1856 (PNSG…GGGP). Residues 1857 to 1884 (ALLNAGSNSNSGVGSGGAASSNSNSSVG) show a composition bias toward low complexity. Over residues 1885–1915 (GIVGSGGPGSNSQGSSGGGGGGPASGGGMGS) the composition is skewed to gly residues. A helical transmembrane segment spans residues 1939–1959 (VAAAVAAQAILAASPLGAMES). 2 positions are modified to phosphoserine: S1980 and S1988. The segment covering 1986-1997 (QSSPAQQSPQDR) has biased composition (low complexity). Residues 1998 to 2017 (AAAKRAEQRRAEQERRRREA) are compositionally biased toward basic and acidic residues.

Its subcellular location is the membrane. Required maternally for proper expression of other homeotic genes involved in pattern formation, such as Ubx. The protein is Homeotic protein female sterile (fs(1)h) of Drosophila melanogaster (Fruit fly).